Reading from the N-terminus, the 175-residue chain is Cyclic pyranopterin monophosphate synthase (175 aa).

Substrate is bound by residues 78–80 (LCH) and 125–126 (ME). D140 is a catalytic residue.

It belongs to the MoaC family. As to quaternary structure, homohexamer; trimer of dimers.

It catalyses the reaction (8S)-3',8-cyclo-7,8-dihydroguanosine 5'-triphosphate = cyclic pyranopterin phosphate + diphosphate. It participates in cofactor biosynthesis; molybdopterin biosynthesis. Catalyzes the conversion of (8S)-3',8-cyclo-7,8-dihydroguanosine 5'-triphosphate to cyclic pyranopterin monophosphate (cPMP). This Rhodopirellula baltica (strain DSM 10527 / NCIMB 13988 / SH1) protein is Cyclic pyranopterin monophosphate synthase.